A 419-amino-acid chain; its full sequence is Putative trans-acting enoyl reductase MT2525 (419 aa).

Lys127 participates in a covalent cross-link: Isoglutamyl lysine isopeptide (Lys-Gln) (interchain with Q-Cter in protein Pup). Positions 197–232 (NDPDARRQLSDPYMLSPDRGAEPELGPQPDLPSRRG) are disordered. Residues 284–304 (VLAPVVSVVGGGVGNAMFGLA) form a helical membrane-spanning segment.

Belongs to the saccharopine dehydrogenase family. Enoyl reductase subfamily.

It localises to the cell membrane. The protein is Putative trans-acting enoyl reductase MT2525 of Mycobacterium tuberculosis (strain CDC 1551 / Oshkosh).